A 185-amino-acid polypeptide reads, in one-letter code: Pyridoxal 5'-phosphate synthase subunit PdxT (185 aa).

Position 46-48 (46-48 (GES)) interacts with L-glutamine. Cys-78 acts as the Nucleophile in catalysis. L-glutamine-binding positions include Arg-106 and 132–133 (IR). Active-site charge relay system residues include His-168 and Glu-170.

The protein belongs to the glutaminase PdxT/SNO family. In the presence of PdxS, forms a dodecamer of heterodimers. Only shows activity in the heterodimer.

The catalysed reaction is aldehydo-D-ribose 5-phosphate + D-glyceraldehyde 3-phosphate + L-glutamine = pyridoxal 5'-phosphate + L-glutamate + phosphate + 3 H2O + H(+). It catalyses the reaction L-glutamine + H2O = L-glutamate + NH4(+). Its pathway is cofactor biosynthesis; pyridoxal 5'-phosphate biosynthesis. In terms of biological role, catalyzes the hydrolysis of glutamine to glutamate and ammonia as part of the biosynthesis of pyridoxal 5'-phosphate. The resulting ammonia molecule is channeled to the active site of PdxS. The sequence is that of Pyridoxal 5'-phosphate synthase subunit PdxT from Corynebacterium diphtheriae (strain ATCC 700971 / NCTC 13129 / Biotype gravis).